The following is a 1202-amino-acid chain: PAN2-PAN3 deadenylation complex catalytic subunit PAN2 (1202 aa).

WD repeat units lie at residues 153-193 (DENE…QKYA), 195-231 (ETPGVTIMRQTNRFFFCGHTSGKVSLRDLRTFKVEHE), 244-280 (VHGNLLAACGFSSRLTGLACDRFLKVYDLRMMRAITP), and 328-367 (PVGPLLMTFDVSASKQALAFGDSEGCVHLWTDSPEPSFNP). Positions 368–485 (YSRETEFALP…VGREEEPHLH (118 aa)) are linker. The USP domain maps to 486–924 (MVSKKYRKVT…VPAILYYVKR (439 aa)). S791 carries the phosphoserine modification. Positions 975-1147 (VGLDAEFVTL…EDARTALQLY (173 aa)) constitute an Exonuclease domain. A divalent metal cation-binding residues include D978, E980, D1087, and D1139. A Phosphoserine modification is found at S1189.

This sequence belongs to the peptidase C19 family. PAN2 subfamily. Forms a heterotrimer with an asymmetric homodimer of the regulatory subunit PAN3 to form the poly(A)-nuclease (PAN) deadenylation complex. Interacts with PAN3 isoform 1/Pan3L and isoform 3/Pan3S. Interacts with ZFP36. A divalent metal cation is required as a cofactor.

Its subcellular location is the cytoplasm. The protein resides in the P-body. The protein localises to the nucleus. The catalysed reaction is Exonucleolytic cleavage of poly(A) to 5'-AMP.. Its activity is regulated as follows. Positively regulated by the regulatory subunit PAN3. In terms of biological role, catalytic subunit of the poly(A)-nuclease (PAN) deadenylation complex, one of two cytoplasmic mRNA deadenylases involved in general and miRNA-mediated mRNA turnover. PAN specifically shortens poly(A) tails of RNA and the activity is stimulated by poly(A)-binding protein (PABP). PAN deadenylation is followed by rapid degradation of the shortened mRNA tails by the CCR4-NOT complex. Deadenylated mRNAs are then degraded by two alternative mechanisms, namely exosome-mediated 3'-5' exonucleolytic degradation, or deadenylation-dependent mRNA decaping and subsequent 5'-3' exonucleolytic degradation by XRN1. Also acts as an important regulator of the HIF1A-mediated hypoxic response. Required for HIF1A mRNA stability independent of poly(A) tail length regulation. The polypeptide is PAN2-PAN3 deadenylation complex catalytic subunit PAN2 (Homo sapiens (Human)).